A 238-amino-acid polypeptide reads, in one-letter code: Uridylate kinase (238 aa).

12–15 serves as a coordination point for ATP; the sequence is KLSG. G54 lines the UMP pocket. The ATP site is built by G55 and R59. UMP-binding positions include D74 and 135 to 142; that span reads TGNPFFTT. Positions 162, 168, and 171 each coordinate ATP.

The protein belongs to the UMP kinase family. Homohexamer.

The protein resides in the cytoplasm. The catalysed reaction is UMP + ATP = UDP + ADP. It participates in pyrimidine metabolism; CTP biosynthesis via de novo pathway; UDP from UMP (UMPK route): step 1/1. Inhibited by UTP. Catalyzes the reversible phosphorylation of UMP to UDP. This Janthinobacterium sp. (strain Marseille) (Minibacterium massiliensis) protein is Uridylate kinase.